The sequence spans 295 residues: Host-inducible protein A (295 aa).

Positions 1–20 are disordered; that stretch reads MHLDRSDSNGGSSRYTLDHE.

It belongs to the NopP family.

This is Host-inducible protein A from Rhizobium fredii (Sinorhizobium fredii).